A 315-amino-acid polypeptide reads, in one-letter code: Annexin Gh1 (315 aa).

Annexin repeat units lie at residues 10 to 81 (PSVS…LWAL), 82 to 153 (DPAE…PLVS), 165 to 236 (TLAK…STVK), and 240 to 311 (YPEK…VLAG). The Ca(2+) site is built by phenylalanine 23, glycine 25, glycine 27, and glutamate 67. Residues isoleucine 253, arginine 255, glycine 257, valine 295, aspartate 297, threonine 298, and glutamate 303 each contribute to the Ca(2+) site.

It belongs to the annexin family. Monomer. Trimer. Oligomerization is calcium-independent. Disassembly of the oligomers seems to be required for calcium-binding.

It localises to the membrane. Functionally, binds to phospholipid vesicles in a calcium-dependent manner in vitro. Prefers phosphatidyl-serine containing membranes. May have a role in the membrane cytoskeleton scaffolding or exocytotic processes. May be involved in oxidative stress response. This Gossypium hirsutum (Upland cotton) protein is Annexin Gh1.